An 87-amino-acid chain; its full sequence is Small ribosomal subunit protein bS20 (87 aa).

A disordered region spans residues 1–27 (MANIKSAKKRAVQSEKRRKHNASRRSM).

The protein belongs to the bacterial ribosomal protein bS20 family.

Functionally, binds directly to 16S ribosomal RNA. The sequence is that of Small ribosomal subunit protein bS20 from Pectobacterium carotovorum subsp. carotovorum (strain PC1).